Consider the following 318-residue polypeptide: Biotin synthase (318 aa).

The 230-residue stretch at 44–273 (LCGNKFDLCT…TVQIRLAGGR (230 aa)) folds into the Radical SAM core domain. [4Fe-4S] cluster contacts are provided by C62, C66, and C69. Positions 106, 138, 198, and 268 each coordinate [2Fe-2S] cluster.

It belongs to the radical SAM superfamily. Biotin synthase family. In terms of assembly, homodimer. Requires [4Fe-4S] cluster as cofactor. [2Fe-2S] cluster serves as cofactor.

It catalyses the reaction (4R,5S)-dethiobiotin + (sulfur carrier)-SH + 2 reduced [2Fe-2S]-[ferredoxin] + 2 S-adenosyl-L-methionine = (sulfur carrier)-H + biotin + 2 5'-deoxyadenosine + 2 L-methionine + 2 oxidized [2Fe-2S]-[ferredoxin]. Its pathway is cofactor biosynthesis; biotin biosynthesis; biotin from 7,8-diaminononanoate: step 2/2. Its function is as follows. Catalyzes the conversion of dethiobiotin (DTB) to biotin by the insertion of a sulfur atom into dethiobiotin via a radical-based mechanism. In Clostridium botulinum (strain Langeland / NCTC 10281 / Type F), this protein is Biotin synthase.